Reading from the N-terminus, the 1482-residue chain is MQRSPLEKASVISKLFFSWTRPILRKGYRQRLELSDIYQIPSADSADNLSEKLEREWDRELASKKNPKLINALRRCFFWRFTFYGIILYLGEVTKAVQPLLLGRIIASYDPDNKVERSIAIYLAVGLCLLFVVRTLLLHPAIFGLHHIGMQMRIAMFSLIYKKTLKLSSRVLDKISIGQLVSLLSNNLNKFDEGLALAHFVWIAPLQVTLLMGLLWDLLQASAFSGLGVLIILACFQAGFGRMMMKYRDQRAGKINERLVITSEMIENIQSVKAYCWEEALEKMIENFRQSELRLTRKAAYVRYFNSSAFFFSGFFVVFLSVLPYALIKGIILRKIFTTISFCIVLRMAVTRQFPWAVQTWYDSLGAINKIQDFLQKQEYKSLEYNLTTTDVVMETVTAFWEERFGELFEKAKQNNNNRKISNVDNSLFFSNFSLLGTPVLKDINFKIERGQLLAVAGSTGAGKTSLLMMIMGELEPSEGKIKHSGRISFCSQFSWIMPGTIKENIIFGVCYDEYRYRSVIKACQLVEDISKFAEKDNTVLGEGGITLSGGQRARISLARAVYKDADLYLLDSPFGYLDVLTEKEIFESCVCKLMANKTRILVTSKMEHLKKADKILILHEGSSYFYGTFSELQNLRPDFSSKLMGYDSFDQFSAERRNSIITETLRRFSLEGDAAHSWNETKKQSFKQTGEFGEKRKNSILNPINSLRRISITQKTPLPMNGIDEDSGETLERRLSLVPDCEQGEGILPRSNLINTGPTLQRGRRQSVLNLMTHSSGNQGQNIHRRTTAFTRKMSLAPQANLVEMDIYSRRLSQDSGLEISEEINEEDLKECFLDDVESIPAVTTWNTYLRYITVHKRLIFVLIWCFVVFLIEVAASLVLLCLLSKVSPEDKGNTTKSANDSSAVIITSTSSFYFLYIYVGVADTFLALGLFRGLPLVHTLITVSKILHHKMLHSVLQAPMSTLNTLKAGGILNRFSKDIAILDDLLPLTIFDFIQLLLIVIGAVAVVSILKPYIFLATVPVIVAFVLLRAYFLHTSQQLKQLESEARSPIFTHLVTSLKGLWTLRAFGRQPYFEALFHKALNLHTANWFLYLSTLRWFQMRIEMIFVIFFIAVTFISILTTGEGEGTVGIILTLAMNIMSTLQWAVNSSIDVDSLMRSVSRVFKFVDIPTEENKPTKSIKLPKDGQLSKVMIIENQHVKKDDIWPSGGQMTVKDLTAKYIDGGNAILENISFSISPGQRVGLLGRTGSGKSTLLSAFLRLLNTKGEIQIDGVSWDSITLQEWRKAFGVIPQKVFIFSGTFRKNLDPYGQWSDQEIWKVADEVGLRSVIEQFPGKLDFVLVDGGYVLSHGHKQLMCLARSVLSKAKILLLDEPSAHLDPITYQIIRRTLKQAFADCTVILCEHRIEAMLECQRFLVIEENKVRQYDSIQRLLSEKSLFRQAISPSDRVKLFPHQNSGKHKSRSKITALKEETEEEVQDTRL.

Residues 1–77 (MQRSPLEKAS…KLINALRRCF (77 aa)) lie on the Cytoplasmic side of the membrane. Residues 78 to 98 (FWRFTFYGIILYLGEVTKAVQ) traverse the membrane as a helical segment. In terms of domain architecture, ABC transmembrane type-1 1 spans 81–365 (FTFYGIILYL…WAVQTWYDSL (285 aa)). The Extracellular portion of the chain corresponds to 99–122 (PLLLGRIIASYDPDNKVERSIAIY). A helical membrane pass occupies residues 123 to 146 (LAVGLCLLFVVRTLLLHPAIFGLH). Over 147–195 (HIGMQMRIAMFSLIYKKTLKLSSRVLDKISIGQLVSLLSNNLNKFDEGL) the chain is Cytoplasmic. Residues 196 to 216 (ALAHFVWIAPLQVTLLMGLLW) form a helical membrane-spanning segment. Residues 217-222 (DLLQAS) lie on the Extracellular side of the membrane. A helical membrane pass occupies residues 223–243 (AFSGLGVLIILACFQAGFGRM). Over 244 to 298 (MMKYRDQRAGKINERLVITSEMIENIQSVKAYCWEEALEKMIENFRQSELRLTRK) the chain is Cytoplasmic. Residues 299 to 319 (AAYVRYFNSSAFFFSGFFVVF) traverse the membrane as a helical segment. Over 320 to 339 (LSVLPYALIKGIILRKIFTT) the chain is Extracellular. The helical transmembrane segment at 340 to 358 (ISFCIVLRMAVTRQFPWAV) threads the bilayer. Topologically, residues 359–859 (QTWYDSLGAI…YLRYITVHKR (501 aa)) are cytoplasmic. ATP-binding positions include W401, S434, 458 to 465 (GSTGAGKT), and Q493. The 224-residue stretch at 423–646 (NVDNSLFFSN…RPDFSSKLMG (224 aa)) folds into the ABC transporter 1 domain. C524 is lipidated: S-palmitoyl cysteine. Phosphoserine occurs at positions 549 and 660. The disordered R region stretch occupies residues 654 to 832 (SAERRNSIIT…EEINEEDLKE (179 aa)). S670 is modified (phosphoserine; by PKA). S686 is modified (phosphoserine). K688 participates in a covalent cross-link: Glycyl lysine isopeptide (Lys-Gly) (interchain with G-Cter in ubiquitin). Residues S700 and S712 each carry the phosphoserine modification. T717 bears the Phosphothreonine mark. A phosphoserine mark is found at S737, S768, S796, and S814. Residues 860 to 880 (LIFVLIWCFVVFLIEVAASLV) form a helical membrane-spanning segment. The ABC transmembrane type-1 2 domain maps to 860–1156 (LIFVLIWCFV…AVNSSIDVDS (297 aa)). The Extracellular portion of the chain corresponds to 881–919 (LLCLLSKVSPEDKGNTTKSANDSSAVIITSTSSFYFLYI). N-linked (GlcNAc...) asparagine glycans are attached at residues N895 and N901. Residues 920-940 (YVGVADTFLALGLFRGLPLVH) form a discontinuously helical membrane-spanning segment. Topologically, residues 941–991 (TLITVSKILHHKMLHSVLQAPMSTLNTLKAGGILNRFSKDIAILDDLLPLT) are cytoplasmic. Residues 992–1012 (IFDFIQLLLIVIGAVAVVSIL) form a helical membrane-spanning segment. Residues 1013–1014 (KP) lie on the Extracellular side of the membrane. A helical membrane pass occupies residues 1015 to 1035 (YIFLATVPVIVAFVLLRAYFL). Residues 1036–1096 (HTSQQLKQLE…TANWFLYLST (61 aa)) are Cytoplasmic-facing. The helical transmembrane segment at 1097-1117 (LRWFQMRIEMIFVIFFIAVTF) threads the bilayer. The Extracellular portion of the chain corresponds to 1118–1131 (ISILTTGEGEGTVG). The helical transmembrane segment at 1132–1152 (IILTLAMNIMSTLQWAVNSSI) threads the bilayer. The Cytoplasmic portion of the chain corresponds to 1153-1482 (DVDSLMRSVS…TEEEVQDTRL (330 aa)). The 234-residue stretch at 1212–1445 (MTVKDLTAKY…KSLFRQAISP (234 aa)) folds into the ABC transporter 2 domain. ATP contacts are provided by residues Y1221 and 1246-1253 (GRTGSGKS). Residues 1388-1482 (RTLKQAFADC…TEEEVQDTRL (95 aa)) form an interaction with GORASP2 region. C1397 carries S-palmitoyl cysteine lipidation. The residue at position 1446 (S1446) is a Phosphoserine. The tract at residues 1450–1482 (KLFPHQNSGKHKSRSKITALKEETEEEVQDTRL) is disordered. Acidic residues predominate over residues 1472-1482 (ETEEEVQDTRL). Positions 1480–1482 (TRL) match the PDZ-binding motif.

The protein belongs to the ABC transporter superfamily. ABCC family. CFTR transporter (TC 3.A.1.202) subfamily. Monomer; does not require oligomerization for channel activity. May form oligomers in the membrane. Interacts with SLC26A3, SLC26A6 and NHERF1. Interacts with SHANK2. Interacts with MYO6. Interacts (via C-terminus) with GOPC (via PDZ domain); this promotes CFTR internalization and thereby decreases channel activity. Interacts with SLC4A7 through NHERF1. Found in a complex with MYO5B and RAB11A. Interacts with ANO1. Interacts with SLC26A8. Interacts with AHCYL1; the interaction increases CFTR activity. Interacts with CSE1L. The core-glycosylated form interacts with GORASP2 (via PDZ GRASP-type 1 domain) in respone to ER stress. Interacts with MARCHF2; the interaction leads to CFTR ubiqtuitination and degradation. Interacts with ADGRG2. N-glycosylated. In terms of processing, phosphorylated; cAMP treatment promotes phosphorylation and activates the channel. Dephosphorylation decreases the ATPase activity (in vitro). Phosphorylation at PKA sites activates the channel. Phosphorylation at PKC sites enhances the response to phosphorylation by PKA. Phosphorylated by AMPK; this inhibits channel activity. Post-translationally, ubiquitinated, leading to its degradation in the lysosome. Deubiquitination by USP10 in early endosomes enhances its endocytic recycling to the cell membrane. Ubiquitinated by RNF185 during ER stress. Ubiquitinated by MARCHF2.

Its subcellular location is the apical cell membrane. The protein resides in the early endosome membrane. It localises to the cell membrane. It is found in the recycling endosome membrane. The protein localises to the endoplasmic reticulum membrane. Its subcellular location is the nucleus. It catalyses the reaction ATP + H2O + closed Cl(-) channel = ADP + phosphate + open Cl(-) channel.. The enzyme catalyses chloride(in) = chloride(out). It carries out the reaction hydrogencarbonate(in) = hydrogencarbonate(out). The catalysed reaction is ATP + H2O = ADP + phosphate + H(+). Functionally, epithelial ion channel that plays an important role in the regulation of epithelial ion and water transport and fluid homeostasis. Mediates the transport of chloride ions across the cell membrane. Possesses an intrinsic ATPase activity and utilizes ATP to gate its channel; the passive flow of anions through the channel is gated by cycles of ATP binding and hydrolysis by the ATP-binding domains. The ion channel is also permeable to HCO(3)(-); selectivity depends on the extracellular chloride concentration. Exerts its function also by modulating the activity of other ion channels and transporters. Contributes to the regulation of the pH and the ion content of the epithelial fluid layer. Modulates the activity of the epithelial sodium channel (ENaC) complex, in part by regulating the cell surface expression of the ENaC complex. May regulate bicarbonate secretion and salvage in epithelial cells by regulating the transporter SLC4A7. Can inhibit the chloride channel activity of ANO1. Plays a role in the chloride and bicarbonate homeostasis during sperm epididymal maturation and capacitation. In Dasypus novemcinctus (Nine-banded armadillo), this protein is Cystic fibrosis transmembrane conductance regulator.